The primary structure comprises 750 residues: Ribosomal RNA large subunit methyltransferase K/L (750 aa).

Positions 46–157 (TAYRLCLWSR…RGEAILSLDL (112 aa)) constitute a THUMP domain.

The protein belongs to the methyltransferase superfamily. RlmKL family.

The protein localises to the cytoplasm. The enzyme catalyses guanosine(2445) in 23S rRNA + S-adenosyl-L-methionine = N(2)-methylguanosine(2445) in 23S rRNA + S-adenosyl-L-homocysteine + H(+). It catalyses the reaction guanosine(2069) in 23S rRNA + S-adenosyl-L-methionine = N(2)-methylguanosine(2069) in 23S rRNA + S-adenosyl-L-homocysteine + H(+). Functionally, specifically methylates the guanine in position 2445 (m2G2445) and the guanine in position 2069 (m7G2069) of 23S rRNA. The polypeptide is Ribosomal RNA large subunit methyltransferase K/L (Pseudomonas savastanoi pv. phaseolicola (strain 1448A / Race 6) (Pseudomonas syringae pv. phaseolicola (strain 1448A / Race 6))).